The following is a 157-amino-acid chain: Protein MGF 110-13L (157 aa).

2 helical membrane-spanning segments follow: residues 14–34 and 39–59; these read QYCL…CALC and LSTT…AQPV.

It belongs to the asfivirus MGF 110 family.

Its subcellular location is the host membrane. Functionally, plays a role in virus cell tropism, and may be required for efficient virus replication in macrophages. The protein is Protein MGF 110-13L of African swine fever virus (isolate Tick/Malawi/Lil 20-1/1983) (ASFV).